A 533-amino-acid chain; its full sequence is Beta-1,2-xylosyltransferase RCN11 (533 aa).

At 1–23 the chain is on the cytoplasmic side; sequence MMPVRTYHHHHHHNNSNNHRLRR. A helical; Signal-anchor for type II membrane protein membrane pass occupies residues 24–44; that stretch reads IIPRVLLAVFAIYAVSFAAYL. The Lumenal portion of the chain corresponds to 45-533; it reads LRHQSPHPHP…LSNILKGFGC (489 aa). The segment at 51 to 78 is disordered; sequence HPHPHPAADPERDAVDAAGGGGGGGAVD. Over residues 56-65 the composition is skewed to basic and acidic residues; that stretch reads PAADPERDAV. N-linked (GlcNAc...) asparagine glycosylation is found at Asn-307 and Asn-313.

Belongs to the glycosyltransferase 61 family. Expressed at the base of the crown roots and in the basal region of the shoot, which contains the shoot and axillary meristems.

It localises to the golgi apparatus membrane. The protein operates within glycan metabolism. Functionally, glycosyltransferase involved in the xylosylation of N-glycans. Possesses beta-1,2-xylosyltransferase activity, transferring xylose from UDP-xylose to the core beta-linked mannose of N-glycans. Beta-1,2-linked xylose residues on N-glycans are critical for seed germination and plant development and growth under conditions of abiotic stress. The chain is Beta-1,2-xylosyltransferase RCN11 from Oryza sativa subsp. japonica (Rice).